The sequence spans 185 residues: Putative manganese efflux pump MntP (185 aa).

A run of 6 helical transmembrane segments spans residues 6–26 (IFII…ACGL), 41–61 (FHFG…GLTV), 65–85 (VETY…GKMI), 107–127 (LVFL…SFSI), 132–152 (IAFP…FGLW), and 164–184 (SHIA…KLLL).

This sequence belongs to the MntP (TC 9.B.29) family.

The protein localises to the cell inner membrane. Its function is as follows. Probably functions as a manganese efflux pump. The chain is Putative manganese efflux pump MntP from Maridesulfovibrio salexigens (strain ATCC 14822 / DSM 2638 / NCIMB 8403 / VKM B-1763) (Desulfovibrio salexigens).